The following is a 955-amino-acid chain: UvrABC system protein A (955 aa).

35 to 42 (GLSGSGKS) is an ATP binding site. ABC transporter domains lie at 322 to 601 (WGST…EESI) and 621 to 951 (GHDN…RYLK). 654 to 661 (GVSGSGKS) contributes to the ATP binding site. A C4-type zinc finger spans residues 754 to 780 (CEACQGDGLIKIEMHFLPDVYVKCDIC).

Belongs to the ABC transporter superfamily. UvrA family. In terms of assembly, forms a heterotetramer with UvrB during the search for lesions.

It is found in the cytoplasm. The UvrABC repair system catalyzes the recognition and processing of DNA lesions. UvrA is an ATPase and a DNA-binding protein. A damage recognition complex composed of 2 UvrA and 2 UvrB subunits scans DNA for abnormalities. When the presence of a lesion has been verified by UvrB, the UvrA molecules dissociate. The chain is UvrABC system protein A from Rickettsia felis (strain ATCC VR-1525 / URRWXCal2) (Rickettsia azadi).